Consider the following 241-residue polypeptide: UDP-2,3-diacylglucosamine hydrolase (241 aa).

5 residues coordinate Mn(2+): Asp8, His10, Asp41, Asn79, and His114. 79–80 (NR) is a binding site for substrate. Substrate contacts are provided by Asp122, Ser160, Lys167, and His195. His195 and His197 together coordinate Mn(2+).

This sequence belongs to the LpxH family. Mn(2+) is required as a cofactor.

It localises to the cell inner membrane. It catalyses the reaction UDP-2-N,3-O-bis[(3R)-3-hydroxytetradecanoyl]-alpha-D-glucosamine + H2O = 2-N,3-O-bis[(3R)-3-hydroxytetradecanoyl]-alpha-D-glucosaminyl 1-phosphate + UMP + 2 H(+). Its pathway is glycolipid biosynthesis; lipid IV(A) biosynthesis; lipid IV(A) from (3R)-3-hydroxytetradecanoyl-[acyl-carrier-protein] and UDP-N-acetyl-alpha-D-glucosamine: step 4/6. Its function is as follows. Hydrolyzes the pyrophosphate bond of UDP-2,3-diacylglucosamine to yield 2,3-diacylglucosamine 1-phosphate (lipid X) and UMP by catalyzing the attack of water at the alpha-P atom. Involved in the biosynthesis of lipid A, a phosphorylated glycolipid that anchors the lipopolysaccharide to the outer membrane of the cell. This chain is UDP-2,3-diacylglucosamine hydrolase, found in Azotobacter vinelandii (strain DJ / ATCC BAA-1303).